The chain runs to 460 residues: tRNA(Ile)-lysidine synthase (460 aa).

An ATP-binding site is contributed by 30-35 (SGGLDS).

Belongs to the tRNA(Ile)-lysidine synthase family.

Its subcellular location is the cytoplasm. The catalysed reaction is cytidine(34) in tRNA(Ile2) + L-lysine + ATP = lysidine(34) in tRNA(Ile2) + AMP + diphosphate + H(+). Its function is as follows. Ligates lysine onto the cytidine present at position 34 of the AUA codon-specific tRNA(Ile) that contains the anticodon CAU, in an ATP-dependent manner. Cytidine is converted to lysidine, thus changing the amino acid specificity of the tRNA from methionine to isoleucine. This Yersinia pseudotuberculosis serotype I (strain IP32953) protein is tRNA(Ile)-lysidine synthase.